We begin with the raw amino-acid sequence, 516 residues long: Ribonuclease Y (516 aa).

A helical membrane pass occupies residues 1 to 21 (MLIKIVIACVITAIIVALIAW). The region spanning 206–269 (TISVVQLPND…ETARIALEKL (64 aa)) is the KH domain. In terms of domain architecture, HD spans 332 to 425 (ALKHSIEVAI…VQAADTISAA (94 aa)).

The protein belongs to the RNase Y family.

It localises to the cell membrane. Endoribonuclease that initiates mRNA decay. The chain is Ribonuclease Y from Lachnoclostridium phytofermentans (strain ATCC 700394 / DSM 18823 / ISDg) (Clostridium phytofermentans).